Reading from the N-terminus, the 300-residue chain is MNTNVTIAGVTFKNPVTTASGTFGSGMEYSEFVDLNRLGAITTKGVSSVPWPGNPVPRIAETYGGMLNAIGLQNPGVDMFVERDLAFLKQFDTKVIVNVCGKSVKEYVEVVERLSEEAVDLLELNISCPNVKEGCIAFGQDPKMIAMIMDEIKRHAKQPVIVKLSPNVTDITEMAKAAEAGGADALSLINTLTGMKIDINHRAFAIANKTGGMSGPAVKPIAVRMVYQVANAVKLPIIGMGGIQNAEDALEFIMAGATVVAVGTANFINPYATVEVIEGIEEFMRKNQISDINDLIGCVK.

FMN contacts are provided by residues Ser20 and 44–45; that span reads KG. Substrate-binding positions include Lys44 and 68–72; that span reads NAIGL. FMN-binding residues include Asn98 and Asn125. Residue Asn125 participates in substrate binding. Catalysis depends on Cys128, which acts as the Nucleophile. 2 residues coordinate FMN: Lys163 and Ile189. A substrate-binding site is contributed by 190-191; sequence NT. FMN contacts are provided by residues Gly215, 241 to 242, and 263 to 264; these read GG and GT.

This sequence belongs to the dihydroorotate dehydrogenase family. Type 1 subfamily. As to quaternary structure, heterotetramer of 2 PyrK and 2 PyrD type B subunits. FMN is required as a cofactor.

It is found in the cytoplasm. The catalysed reaction is (S)-dihydroorotate + NAD(+) = orotate + NADH + H(+). Its pathway is pyrimidine metabolism; UMP biosynthesis via de novo pathway; orotate from (S)-dihydroorotate (NAD(+) route): step 1/1. Its function is as follows. Catalyzes the conversion of dihydroorotate to orotate with NAD(+) as electron acceptor. The chain is Dihydroorotate dehydrogenase B (NAD(+)), catalytic subunit (pyrD) from Lachnoclostridium phytofermentans (strain ATCC 700394 / DSM 18823 / ISDg) (Clostridium phytofermentans).